The sequence spans 682 residues: Potassium-transporting ATPase ATP-binding subunit (682 aa).

A run of 4 helical transmembrane segments spans residues 34-54 (PVMF…IAMA), 62-82 (ALFS…ANFA), 219-239 (IALT…TATL), and 254-274 (VLVA…LSAI). The 4-aspartylphosphate intermediate role is filled by Asp-307. ATP-binding positions include Asp-344, Glu-348, 377 to 384 (FTAQSRMS), and Lys-395. The Mg(2+) site is built by Asp-518 and Asp-522. 3 consecutive transmembrane segments (helical) span residues 588 to 608 (FAII…LNIM), 616 to 636 (AILS…PLAL), and 656 to 676 (IYGL…DLLL).

This sequence belongs to the cation transport ATPase (P-type) (TC 3.A.3) family. Type IA subfamily. The system is composed of three essential subunits: KdpA, KdpB and KdpC.

It is found in the cell inner membrane. It catalyses the reaction K(+)(out) + ATP + H2O = K(+)(in) + ADP + phosphate + H(+). Its function is as follows. Part of the high-affinity ATP-driven potassium transport (or Kdp) system, which catalyzes the hydrolysis of ATP coupled with the electrogenic transport of potassium into the cytoplasm. This subunit is responsible for energy coupling to the transport system and for the release of the potassium ions to the cytoplasm. This is Potassium-transporting ATPase ATP-binding subunit from Escherichia coli (strain SMS-3-5 / SECEC).